The following is a 225-amino-acid chain: PKHD-type hydroxylase YbiX (225 aa).

A Fe2OG dioxygenase domain is found at 78 to 177 (TLSTPLFNRY…RVASFMWIQS (100 aa)). Fe cation is bound by residues H96, D98, and H158. Residue R168 participates in 2-oxoglutarate binding.

Fe(2+) serves as cofactor. The cofactor is L-ascorbate.

The sequence is that of PKHD-type hydroxylase YbiX from Shigella flexneri serotype 5b (strain 8401).